Reading from the N-terminus, the 275-residue chain is Ribosomal RNA small subunit methyltransferase A (275 aa).

Positions 19, 21, 46, 71, 94, and 117 each coordinate S-adenosyl-L-methionine.

This sequence belongs to the class I-like SAM-binding methyltransferase superfamily. rRNA adenine N(6)-methyltransferase family. RsmA subfamily.

It localises to the cytoplasm. The catalysed reaction is adenosine(1518)/adenosine(1519) in 16S rRNA + 4 S-adenosyl-L-methionine = N(6)-dimethyladenosine(1518)/N(6)-dimethyladenosine(1519) in 16S rRNA + 4 S-adenosyl-L-homocysteine + 4 H(+). In terms of biological role, specifically dimethylates two adjacent adenosines (A1518 and A1519) in the loop of a conserved hairpin near the 3'-end of 16S rRNA in the 30S particle. May play a critical role in biogenesis of 30S subunits. The sequence is that of Ribosomal RNA small subunit methyltransferase A from Burkholderia mallei (strain NCTC 10247).